The sequence spans 1258 residues: Ice nucleation protein (1258 aa).

The tract at residues 162-1217 is octapeptide periodicity; that stretch reads ATYGSTLSGT…LTAGENSVLI (1056 aa). Disordered regions lie at residues 260 to 287, 311 to 342, 356 to 383, 407 to 438, and 452 to 480; these read YGST…KGSD, TQTA…GYGS, and YGST…GSDL. Polar residues-rich tracts occupy residues 261 to 286, 311 to 334, 357 to 382, 407 to 430, and 453 to 480; these read GSTQ…QKGS, TQTA…QKGS, and GSTQ…GSDL.

This sequence belongs to the bacterial ice nucleation protein family.

It is found in the cell outer membrane. Ice nucleation proteins enable bacteria to nucleate crystallization in supercooled water. The sequence is that of Ice nucleation protein (iceE) from Enterobacter agglomerans (Erwinia herbicola).